The sequence spans 241 residues: Phosphoribosylaminoimidazole-succinocarboxamide synthase (241 aa).

Belongs to the SAICAR synthetase family.

The enzyme catalyses 5-amino-1-(5-phospho-D-ribosyl)imidazole-4-carboxylate + L-aspartate + ATP = (2S)-2-[5-amino-1-(5-phospho-beta-D-ribosyl)imidazole-4-carboxamido]succinate + ADP + phosphate + 2 H(+). Its pathway is purine metabolism; IMP biosynthesis via de novo pathway; 5-amino-1-(5-phospho-D-ribosyl)imidazole-4-carboxamide from 5-amino-1-(5-phospho-D-ribosyl)imidazole-4-carboxylate: step 1/2. This Deinococcus geothermalis (strain DSM 11300 / CIP 105573 / AG-3a) protein is Phosphoribosylaminoimidazole-succinocarboxamide synthase.